A 181-amino-acid polypeptide reads, in one-letter code: Keratin-associated protein 4-5 (181 aa).

26 tandem repeats follow at residues 5–9 (CCGSV), 20–24 (CCRPS), 25–29 (CCQTT), 30–34 (CCRTT), 35–39 (CCRPS), 40–44 (CCKPQ), 45–49 (CCQSV), 55–59 (CCHPS), 60–64 (CCISS), 65–69 (CCRPY), 70–74 (CCESS), 75–79 (CCRPC), 80–84 (CCQTT), 85–89 (CCRTT), 90–94 (CCRTT), 95–99 (CCCPS), 100–104 (CCVSS), 105–109 (CCRPQ), 110–114 (CCQSV), 115–119 (CCQPT), 120–124 (CCRPS), 125–129 (CCISS), 130–134 (CCHPS), 135–139 (CCESS), 140–144 (CCRPC), and 145–149 (CCVRP). Residues 5 to 154 (CCGSVSSEQS…CCVRPVCGRV (150 aa)) form a 26 X 5 AA repeats of C-C-[GRQVCHIEK]-[SPTR]-[VSTQYC] region.

This sequence belongs to the KRTAP type 4 family. In terms of assembly, interacts with hair keratins. As to expression, expressed in the hair follicles.

Functionally, in the hair cortex, hair keratin intermediate filaments are embedded in an interfilamentous matrix, consisting of hair keratin-associated proteins (KRTAP), which are essential for the formation of a rigid and resistant hair shaft through their extensive disulfide bond cross-linking with abundant cysteine residues of hair keratins. The matrix proteins include the high-sulfur and high-glycine-tyrosine keratins. This chain is Keratin-associated protein 4-5 (KRTAP4-5), found in Homo sapiens (Human).